The following is a 177-amino-acid chain: Large ribosomal subunit protein uL5 (177 aa).

It belongs to the universal ribosomal protein uL5 family. In terms of assembly, part of the 50S ribosomal subunit; part of the 5S rRNA/L5/L18/L25 subcomplex. Contacts the 5S rRNA and the P site tRNA. Forms a bridge to the 30S subunit in the 70S ribosome.

Its function is as follows. This is one of the proteins that bind and probably mediate the attachment of the 5S RNA into the large ribosomal subunit, where it forms part of the central protuberance. In the 70S ribosome it contacts protein S13 of the 30S subunit (bridge B1b), connecting the 2 subunits; this bridge is implicated in subunit movement. Contacts the P site tRNA; the 5S rRNA and some of its associated proteins might help stabilize positioning of ribosome-bound tRNAs. This is Large ribosomal subunit protein uL5 from Wolbachia pipientis wMel.